A 427-amino-acid polypeptide reads, in one-letter code: 3-phosphoshikimate 1-carboxyvinyltransferase (427 aa).

3-phosphoshikimate contacts are provided by K23, S24, and R28. Phosphoenolpyruvate is bound at residue K23. Phosphoenolpyruvate-binding residues include G97 and R125. 3-phosphoshikimate is bound by residues S169, S170, Q171, S197, D313, N336, and K340. Q171 provides a ligand contact to phosphoenolpyruvate. D313 serves as the catalytic Proton acceptor. Positions 344, 386, and 411 each coordinate phosphoenolpyruvate.

The protein belongs to the EPSP synthase family. Monomer.

Its subcellular location is the cytoplasm. It carries out the reaction 3-phosphoshikimate + phosphoenolpyruvate = 5-O-(1-carboxyvinyl)-3-phosphoshikimate + phosphate. It participates in metabolic intermediate biosynthesis; chorismate biosynthesis; chorismate from D-erythrose 4-phosphate and phosphoenolpyruvate: step 6/7. Its function is as follows. Catalyzes the transfer of the enolpyruvyl moiety of phosphoenolpyruvate (PEP) to the 5-hydroxyl of shikimate-3-phosphate (S3P) to produce enolpyruvyl shikimate-3-phosphate and inorganic phosphate. The protein is 3-phosphoshikimate 1-carboxyvinyltransferase of Yersinia ruckeri.